The chain runs to 356 residues: Probable L-asparaginase 4 (356 aa).

A signal peptide spans 1–22; it reads MWGFIVTCGIFLVLLCQLRLLS. One can recognise an Asparaginase/glutaminase domain in the interval 36–356; that stretch reads PNVTVFAMGG…RDIEGLFSIK (321 aa). Residue N37 is glycosylated (N-linked (GlcNAc...) asparagine). T46 (O-isoaspartyl threonine intermediate) is an active-site residue. An N-linked (GlcNAc...) asparagine glycan is attached at N52. Substrate contacts are provided by residues S93 and 126–127; that span reads TD. A glycan (N-linked (GlcNAc...) asparagine) is linked at N176.

This sequence belongs to the asparaginase 1 family.

The protein resides in the secreted. The protein localises to the cell wall. It carries out the reaction L-asparagine + H2O = L-aspartate + NH4(+). This Schizosaccharomyces pombe (strain 972 / ATCC 24843) (Fission yeast) protein is Probable L-asparaginase 4.